The following is a 526-amino-acid chain: Probable DNA ligase (526 aa).

Glu-228 provides a ligand contact to ATP. The active-site N6-AMP-lysine intermediate is the Lys-230. Positions 235, 250, 279, 319, 391, and 397 each coordinate ATP.

It belongs to the ATP-dependent DNA ligase family. Requires Mg(2+) as cofactor.

It carries out the reaction ATP + (deoxyribonucleotide)n-3'-hydroxyl + 5'-phospho-(deoxyribonucleotide)m = (deoxyribonucleotide)n+m + AMP + diphosphate.. Functionally, DNA ligase that seals nicks in double-stranded DNA during DNA replication, DNA recombination and DNA repair. In Mycobacterium avium (strain 104), this protein is Probable DNA ligase.